A 582-amino-acid polypeptide reads, in one-letter code: Semenogelin-2 (582 aa).

The N-terminal stretch at 1–23 (MKSIILFVLSLLLILEKQAAVMG) is a signal peptide. Disordered stretches follow at residues 25–62 (KGGS…SKGS), 91–190 (HKTT…QGGS), and 272–553 (NLNQ…FSGA). Residues 50-59 (GQKDKQHTES) are compositionally biased toward basic and acidic residues. Over residues 92–134 (KTTKSKQHLRRHQRLLNYKQKGRGRVKPKRHFHLIVIHRKGGQ) the composition is skewed to basic residues. 2 stretches are compositionally biased toward polar residues: residues 137–161 (HGTQ…QYSN) and 174–190 (EQAS…QGGS). The span at 293 to 305 (TEERQPNHEEKSV) shows a compositional bias: basic and acidic residues. Over residues 325–335 (KSQNQVTIPSQ) the composition is skewed to polar residues. Over residues 336–345 (DQEHGHKENK) the composition is skewed to basic and acidic residues. A compositionally biased stretch (polar residues) spans 385 to 395 (KSQNQVAIPSQ). Residues 396 to 405 (DQEHGHKENK) are compositionally biased toward basic and acidic residues. A compositionally biased stretch (polar residues) spans 445–455 (KSQNQVTIPSQ). Basic and acidic residues predominate over residues 456–465 (DQEHGHKENK). Composition is skewed to polar residues over residues 487–498 (KDVSQSSLSFQT) and 506–529 (SQIQ…NSGK). A compositionally biased stretch (basic and acidic residues) spans 530–546 (SADRKQDLLSHEQEGRY).

Belongs to the semenogelin family. Interacts with SERPINA5.

The protein localises to the secreted. Its function is as follows. Participates in the formation of a gel matrix (sperm coagulum) entrapping the accessory gland secretions and ejaculated spermatozoa. This Macaca fascicularis (Crab-eating macaque) protein is Semenogelin-2 (SEMG2).